Consider the following 510-residue polypeptide: Leucine-rich repeat-containing protein 53 (510 aa).

LRR repeat units follow at residues 34-55, 58-79, 82-102, 108-129, 132-153, 158-179, and 182-203; these read TTRVLIITDGYLSSIESTNLSL, NLALLSLSRNGIEDVQEDALDG, MLRTLLLEHNQISSSSLTDHT, SLQVLVLSNNALRTLRGSWFRN, GLTRLQLDGNQITNLTDSSFGG, SLRHLDLSNNFISYIGKDAFRP, and QLQEVDLSRNRLAHMPDVFTPL. Positions 214-271 constitute an LRRCT domain; it reads NQWSCTCDLHPLARFLRNYIKSSAHTLRNAKDLNCQPSTAAVAAAQSVLRLSETNCDP. A helical membrane pass occupies residues 294–314; sequence LLTVLGFAGAVGLTCLGLVVF.

The protein localises to the membrane. This Macaca fascicularis (Crab-eating macaque) protein is Leucine-rich repeat-containing protein 53 (LRRC53).